The following is a 467-amino-acid chain: tRNA dimethylallyltransferase (467 aa).

The N-terminal 47 residues, 1-47 (MASVAAARAVPVGSGLRGLQRTLPLVVILGATGTGKSTLALQLGQRL), are a transit peptide targeting the mitochondrion. A dimethylallyl diphosphate-binding site is contributed by 32-37 (TGTGKS). 2 interaction with substrate tRNA regions span residues 55–58 (DSMQ) and 183–187 (RKVAR). The segment at 221–230 (FSNPCILWLH) is core aggregation region. Positions 233–255 (QAVLDERLDKRVDDMLAAGLLEE) are interaction with isopentenylpyrophosphate transferase. 2 interaction with substrate tRNA regions span residues 281-283 (QSI) and 313-331 (ALKQ…WVKN). Residues 395–425 (HLCDLCDRIIIGDREWAAHIKSKSHLNQLKK) form a Matrin-type zinc finger. Positions 429 to 467 (LDSDAVNTIESQSVSPDHNKEPKEKGSPGQNDQELKCSV) are disordered. Positions 433-444 (AVNTIESQSVSP) are enriched in polar residues. Position 443 is a phosphoserine (S443). A compositionally biased stretch (basic and acidic residues) spans 445 to 454 (DHNKEPKEKG). The residue at position 455 (S455) is a Phosphoserine.

This sequence belongs to the IPP transferase family.

The protein localises to the mitochondrion. It is found in the cytoplasm. The catalysed reaction is adenosine(37) in tRNA + dimethylallyl diphosphate = N(6)-dimethylallyladenosine(37) in tRNA + diphosphate. Functionally, catalyzes the transfer of a dimethylallyl group onto the adenine at position 37 of both cytosolic and mitochondrial tRNAs, leading to the formation of N6-(dimethylallyl)adenosine (i6A37). Mediates modification of a limited subset of tRNAs: tRNA(Ser)(AGA), tRNA(Ser)(CGA), tRNA(Ser)(UGA), as well as partial modification of the selenocysteine tRNA(Ser)(UCA). TRIT1 is therefore required for selenoprotein expression. This chain is tRNA dimethylallyltransferase (TRIT1), found in Homo sapiens (Human).